The following is a 327-amino-acid chain: MHILKDSLSITVSSGDGGAGCVSFLRERFNTKGGPDGGDGGRGGDVIFKVKANLKSLSLYKNGQRLAANNGKPGMGSRKSGASGEDLVIFVPPNTCIYDVATGSMLFELQNFDDEVIALKGGRGGLGNVHFKSSTKRTPRFAQPGESGATLNLRLELSLIADIGLVGFPNAGKSSLISTITASKSRVANYPFTTRFPHLGVLKASYNDLVIADVPGLIEGASQGIGLGFEFLRHISKTKILVFLIDVASDNFMSAYDILVNELSAYDIGLSSKKRIIVANKLDLEGAIENFNQLKRALVGERVLGISIYDNTGINELVSELFALSRI.

One can recognise an Obg domain in the interval 2-160; that stretch reads HILKDSLSIT…LNLRLELSLI (159 aa). An OBG-type G domain is found at 161-326; the sequence is ADIGLVGFPN…LVSELFALSR (166 aa). Residues 167 to 174, 192 to 196, 213 to 216, 280 to 283, and 307 to 309 contribute to the GTP site; these read GFPNAGKS, FTTRF, DVPG, NKLD, and SIY. 2 residues coordinate Mg(2+): S174 and T194.

Belongs to the TRAFAC class OBG-HflX-like GTPase superfamily. OBG GTPase family. As to quaternary structure, monomer. It depends on Mg(2+) as a cofactor.

It is found in the cytoplasm. Its function is as follows. An essential GTPase which binds GTP, GDP and possibly (p)ppGpp with moderate affinity, with high nucleotide exchange rates and a fairly low GTP hydrolysis rate. Plays a role in control of the cell cycle, stress response, ribosome biogenesis and in those bacteria that undergo differentiation, in morphogenesis control. The chain is GTPase Obg from Borrelia hermsii (strain HS1 / DAH).